A 355-amino-acid chain; its full sequence is NADH dehydrogenase [ubiquinone] 1 alpha subcomplex subunit 10, mitochondrial (355 aa).

The N-terminal 35 residues, 1–35, are a transit peptide targeting the mitochondrion; the sequence is MALRLLKLGATSASARVVAAGAQRVRGIHSSGQCK. A Phosphoserine; by PINK1 modification is found at serine 250. Lysine 285 is subject to N6-succinyllysine.

It belongs to the complex I NDUFA10 subunit family. As to quaternary structure, complex I is composed of 45 different subunits. This a component of the hydrophobic protein fraction. FAD serves as cofactor. Phosphorylation at Ser-250 by PINK1 is required for the binding and/or reduction of the complex I substrate ubiquinone.

The protein resides in the mitochondrion matrix. Functionally, accessory subunit of the mitochondrial membrane respiratory chain NADH dehydrogenase (Complex I), that is believed not to be involved in catalysis. Complex I functions in the transfer of electrons from NADH to the respiratory chain. The immediate electron acceptor for the enzyme is believed to be ubiquinone. This chain is NADH dehydrogenase [ubiquinone] 1 alpha subcomplex subunit 10, mitochondrial (NDUFA10), found in Gorilla gorilla gorilla (Western lowland gorilla).